The primary structure comprises 181 residues: MTTDTHTLHIEEILDLLPHRFPFLLVDRVLDFEEGKFLRAVKNVSFNEPFFQGHFPGKPIFPGVLILEAMAQATGILAFKSRGKLEPGELYYFAGIDEARFKRPVVPGDQMIMEVEFVKERRGLTRFTGVAKVDGEIVCTATMMCARSKPAAPAESVVVKPDVVKPDVVKPDVVNPVVKES.

The active site involves H54.

It belongs to the thioester dehydratase family. FabZ subfamily.

The protein resides in the cytoplasm. The catalysed reaction is a (3R)-hydroxyacyl-[ACP] = a (2E)-enoyl-[ACP] + H2O. Involved in unsaturated fatty acids biosynthesis. Catalyzes the dehydration of short chain beta-hydroxyacyl-ACPs and long chain saturated and unsaturated beta-hydroxyacyl-ACPs. This is 3-hydroxyacyl-[acyl-carrier-protein] dehydratase FabZ from Yersinia pestis.